A 120-amino-acid chain; its full sequence is Large ribosomal subunit protein uL18 (120 aa).

A disordered region spans residues 1–22 (MITKTSKNAARQKRHARVRAKL). Over residues 10–20 (ARQKRHARVRA) the composition is skewed to basic residues.

This sequence belongs to the universal ribosomal protein uL18 family. In terms of assembly, part of the 50S ribosomal subunit; part of the 5S rRNA/L5/L18/L25 subcomplex. Contacts the 5S and 23S rRNAs.

In terms of biological role, this is one of the proteins that bind and probably mediate the attachment of the 5S RNA into the large ribosomal subunit, where it forms part of the central protuberance. In Bacillus velezensis (strain DSM 23117 / BGSC 10A6 / LMG 26770 / FZB42) (Bacillus amyloliquefaciens subsp. plantarum), this protein is Large ribosomal subunit protein uL18.